Consider the following 175-residue polypeptide: MELTVGRVVKAHGISGEIVVEIRTDDPAARFAPGNTLRAKPSRGGPERSCVIESAREHGGRLLVRLAGVTDRDAADALRGTLFVVDSAELPDIDEPDTYYDHQLEGLQVRTTGGRRVGAVAEVLHTAAGELLAVRDDADGAPREVLVPFVSAIVTAVSLDDGLIEIDPPDGLLDL.

Residues 96–172 enclose the PRC barrel domain; it reads PDTYYDHQLE…LIEIDPPDGL (77 aa).

It belongs to the RimM family. As to quaternary structure, binds ribosomal protein uS19.

Its subcellular location is the cytoplasm. An accessory protein needed during the final step in the assembly of 30S ribosomal subunit, possibly for assembly of the head region. Essential for efficient processing of 16S rRNA. May be needed both before and after RbfA during the maturation of 16S rRNA. It has affinity for free ribosomal 30S subunits but not for 70S ribosomes. The protein is Ribosome maturation factor RimM of Mycolicibacterium paratuberculosis (strain ATCC BAA-968 / K-10) (Mycobacterium paratuberculosis).